Reading from the N-terminus, the 292-residue chain is Ribosomal protein L11 methyltransferase (292 aa).

Positions 144, 165, 187, and 229 each coordinate S-adenosyl-L-methionine.

Belongs to the methyltransferase superfamily. PrmA family.

It localises to the cytoplasm. It carries out the reaction L-lysyl-[protein] + 3 S-adenosyl-L-methionine = N(6),N(6),N(6)-trimethyl-L-lysyl-[protein] + 3 S-adenosyl-L-homocysteine + 3 H(+). In terms of biological role, methylates ribosomal protein L11. The polypeptide is Ribosomal protein L11 methyltransferase (Saccharophagus degradans (strain 2-40 / ATCC 43961 / DSM 17024)).